The following is a 1225-amino-acid chain: DNA-directed RNA polymerase subunit beta' (1225 aa).

Zn(2+) is bound by residues C60, C62, C75, and C78. Residues D450, D452, and D454 each coordinate Mg(2+). Zn(2+) is bound by residues C818, C892, C899, and C902.

The protein belongs to the RNA polymerase beta' chain family. In terms of assembly, the RNAP catalytic core consists of 2 alpha, 1 beta, 1 beta' and 1 omega subunit. When a sigma factor is associated with the core the holoenzyme is formed, which can initiate transcription. The cofactor is Mg(2+). Zn(2+) is required as a cofactor.

The enzyme catalyses RNA(n) + a ribonucleoside 5'-triphosphate = RNA(n+1) + diphosphate. Its function is as follows. DNA-dependent RNA polymerase catalyzes the transcription of DNA into RNA using the four ribonucleoside triphosphates as substrates. This Streptococcus pneumoniae (strain ATCC BAA-255 / R6) protein is DNA-directed RNA polymerase subunit beta'.